The chain runs to 98 residues: Co-chaperonin GroES (98 aa).

The protein belongs to the GroES chaperonin family. In terms of assembly, heptamer of 7 subunits arranged in a ring. Interacts with the chaperonin GroEL.

The protein resides in the cytoplasm. Functionally, together with the chaperonin GroEL, plays an essential role in assisting protein folding. The GroEL-GroES system forms a nano-cage that allows encapsulation of the non-native substrate proteins and provides a physical environment optimized to promote and accelerate protein folding. GroES binds to the apical surface of the GroEL ring, thereby capping the opening of the GroEL channel. The sequence is that of Co-chaperonin GroES from Bartonella quintana (strain Toulouse) (Rochalimaea quintana).